The primary structure comprises 358 residues: UDP-N-acetylglucosamine--N-acetylmuramyl-(pentapeptide) pyrophosphoryl-undecaprenol N-acetylglucosamine transferase (358 aa).

UDP-N-acetyl-alpha-D-glucosamine-binding positions include 10–12 (TGG), Asn124, Ser196, and Gln293.

Belongs to the glycosyltransferase 28 family. MurG subfamily.

Its subcellular location is the cell membrane. The enzyme catalyses di-trans,octa-cis-undecaprenyl diphospho-N-acetyl-alpha-D-muramoyl-L-alanyl-D-glutamyl-meso-2,6-diaminopimeloyl-D-alanyl-D-alanine + UDP-N-acetyl-alpha-D-glucosamine = di-trans,octa-cis-undecaprenyl diphospho-[N-acetyl-alpha-D-glucosaminyl-(1-&gt;4)]-N-acetyl-alpha-D-muramoyl-L-alanyl-D-glutamyl-meso-2,6-diaminopimeloyl-D-alanyl-D-alanine + UDP + H(+). It functions in the pathway cell wall biogenesis; peptidoglycan biosynthesis. Cell wall formation. Catalyzes the transfer of a GlcNAc subunit on undecaprenyl-pyrophosphoryl-MurNAc-pentapeptide (lipid intermediate I) to form undecaprenyl-pyrophosphoryl-MurNAc-(pentapeptide)GlcNAc (lipid intermediate II). The protein is UDP-N-acetylglucosamine--N-acetylmuramyl-(pentapeptide) pyrophosphoryl-undecaprenol N-acetylglucosamine transferase of Exiguobacterium sp. (strain ATCC BAA-1283 / AT1b).